The chain runs to 92 residues: MKMVYLGLFLIITSCVISSGNLIYECKWADSIRLKDKNPTHEFCKKKCEEKNTDRITVQHGFHSSDYRCTCQGEKILETPYQSDGVKDCHRI.

Positions 1 to 20 are cleaved as a signal peptide; the sequence is MKMVYLGLFLIITSCVISSG.

Contains 3 disulfide bonds. In terms of tissue distribution, expressed by the venom gland.

Its subcellular location is the secreted. Functionally, inhibits voltage-gated potassium channels (Kv) (IC(50)=about 10 nM), when tested on DRG neurons. This chain is Kappa-scoloptoxin(15)-Ssd2a, found in Scolopendra dehaani (Thai centipede).